The sequence spans 303 residues: Cell division protein ZipA (303 aa).

Residues 1–6 (MMQDLR) are Periplasmic-facing. The helical transmembrane segment at 7–27 (LILIIVGAIAIIALLLHGLWT) threads the bilayer. The Cytoplasmic portion of the chain corresponds to 28–303 (SRKERSSLFR…RIRSTLGVQV (276 aa)). Disordered stretches follow at residues 39–61 (RPVKRHKHDRQNSFVDDSDDEAF), 66–85 (KPYAHKQVKSHQEYKAEPAI), and 124–159 (EQEPQLGLFEFEEQNESERNGSAIEEKSQEAAGEKE). Basic and acidic residues-rich tracts occupy residues 75 to 85 (SHQEYKAEPAI) and 139 to 159 (ESERNGSAIEEKSQEAAGEKE).

This sequence belongs to the ZipA family. As to quaternary structure, interacts with FtsZ via their C-terminal domains.

It is found in the cell inner membrane. Essential cell division protein that stabilizes the FtsZ protofilaments by cross-linking them and that serves as a cytoplasmic membrane anchor for the Z ring. Also required for the recruitment to the septal ring of downstream cell division proteins. The protein is Cell division protein ZipA of Photorhabdus laumondii subsp. laumondii (strain DSM 15139 / CIP 105565 / TT01) (Photorhabdus luminescens subsp. laumondii).